Reading from the N-terminus, the 430-residue chain is Long-chain specific acyl-CoA dehydrogenase, mitochondrial (430 aa).

A mitochondrion-targeting transit peptide spans 1–30; that stretch reads MAARLLRGSLRFLGGHCAARPLPALRCSHS. Residue lysine 42 is modified to N6-acetyllysine. Phosphoserine occurs at positions 54 and 55. Residues lysine 66 and lysine 81 each carry the N6-acetyllysine; alternate modification. Lysine 66 and lysine 81 each carry N6-succinyllysine; alternate. N6-acetyllysine occurs at positions 92 and 95. N6-succinyllysine is present on lysine 165. FAD-binding positions include 170 to 179 and 203 to 205; these read IAMTELGAGS and FIS. Residue serine 179 coordinates substrate. 227–228 contributes to the substrate binding site; it reads AR. N6-succinyllysine is present on lysine 240. Lysine 254 and lysine 279 each carry N6-acetyllysine; alternate. 2 positions are modified to N6-succinyllysine; alternate: lysine 254 and lysine 279. Substrate is bound by residues tyrosine 282 and 289 to 292; that span reads PQER. Glutamate 291 (proton acceptor) is an active-site residue. FAD is bound at residue arginine 317. Lysine 318 is modified (N6-acetyllysine). At lysine 322 the chain carries N6-acetyllysine; alternate. N6-succinyllysine; alternate is present on lysine 322. Glutamine 328 contributes to the FAD binding site. Lysine 358 is modified (N6-acetyllysine). At serine 362 the chain carries Phosphoserine. 385–389 provides a ligand contact to FAD; that stretch reads QLHGG. Residue 412 to 413 participates in substrate binding; that stretch reads GG. 414-416 serves as a coordination point for FAD; sequence TNE.

The protein belongs to the acyl-CoA dehydrogenase family. In terms of assembly, homotetramer. Requires FAD as cofactor. Acetylation at Lys-318 and Lys-322 in proximity of the cofactor-binding sites strongly reduces catalytic activity. These sites are deacetylated by SIRT3.

It is found in the mitochondrion matrix. The enzyme catalyses a long-chain 2,3-saturated fatty acyl-CoA + oxidized [electron-transfer flavoprotein] + H(+) = a long-chain (2E)-enoyl-CoA + reduced [electron-transfer flavoprotein]. It catalyses the reaction hexanoyl-CoA + oxidized [electron-transfer flavoprotein] + H(+) = (2E)-hexenoyl-CoA + reduced [electron-transfer flavoprotein]. It carries out the reaction octanoyl-CoA + oxidized [electron-transfer flavoprotein] + H(+) = (2E)-octenoyl-CoA + reduced [electron-transfer flavoprotein]. The catalysed reaction is decanoyl-CoA + oxidized [electron-transfer flavoprotein] + H(+) = (2E)-decenoyl-CoA + reduced [electron-transfer flavoprotein]. The enzyme catalyses dodecanoyl-CoA + oxidized [electron-transfer flavoprotein] + H(+) = (2E)-dodecenoyl-CoA + reduced [electron-transfer flavoprotein]. It catalyses the reaction tetradecanoyl-CoA + oxidized [electron-transfer flavoprotein] + H(+) = (2E)-tetradecenoyl-CoA + reduced [electron-transfer flavoprotein]. It carries out the reaction oxidized [electron-transfer flavoprotein] + hexadecanoyl-CoA + H(+) = (2E)-hexadecenoyl-CoA + reduced [electron-transfer flavoprotein]. The catalysed reaction is octadecanoyl-CoA + oxidized [electron-transfer flavoprotein] + H(+) = (2E)-octadecenoyl-CoA + reduced [electron-transfer flavoprotein]. The enzyme catalyses eicosanoyl-CoA + oxidized [electron-transfer flavoprotein] + H(+) = (2E)-eicosenoyl-CoA + reduced [electron-transfer flavoprotein]. It catalyses the reaction docosanoyl-CoA + oxidized [electron-transfer flavoprotein] + H(+) = (2E)-docosenoyl-CoA + reduced [electron-transfer flavoprotein]. It carries out the reaction tetracosanoyl-CoA + oxidized [electron-transfer flavoprotein] + H(+) = (2E)-tetracosenoyl-CoA + reduced [electron-transfer flavoprotein]. The catalysed reaction is (5E)-tetradecenoyl-CoA + oxidized [electron-transfer flavoprotein] + H(+) = (2E,5E)-tetradecadienoyl-CoA + reduced [electron-transfer flavoprotein]. The enzyme catalyses (5Z)-tetradecenoyl-CoA + oxidized [electron-transfer flavoprotein] + H(+) = (2E,5Z)-tetradecadienoyl-CoA + reduced [electron-transfer flavoprotein]. It catalyses the reaction oxidized [electron-transfer flavoprotein] + (9Z)-octadecenoyl-CoA + H(+) = (2E,9Z)-octadecadienoyl-CoA + reduced [electron-transfer flavoprotein]. It functions in the pathway lipid metabolism; mitochondrial fatty acid beta-oxidation. Functionally, long-chain specific acyl-CoA dehydrogenase is one of the acyl-CoA dehydrogenases that catalyze the first step of mitochondrial fatty acid beta-oxidation, an aerobic process breaking down fatty acids into acetyl-CoA and allowing the production of energy from fats. The first step of fatty acid beta-oxidation consists in the removal of one hydrogen from C-2 and C-3 of the straight-chain fatty acyl-CoA thioester, resulting in the formation of trans-2-enoyl-CoA. Among the different mitochondrial acyl-CoA dehydrogenases, long-chain specific acyl-CoA dehydrogenase can act on saturated and unsaturated acyl-CoAs with 6 to 24 carbons with a preference for 8 to 18 carbons long primary chains. The sequence is that of Long-chain specific acyl-CoA dehydrogenase, mitochondrial from Macaca fascicularis (Crab-eating macaque).